The sequence spans 548 residues: Serine/threonine-protein phosphatase 2A 56 kDa regulatory subunit delta 1 isoform (548 aa).

A compositionally biased stretch (basic residues) spans 1–10 (MKGIKSKMLS). Residues 1 to 75 (MKGIKSKMLS…KKVPIDTTPT (75 aa)) are disordered. The span at 27 to 39 (KKSNSHDSSKAPK) shows a compositional bias: basic and acidic residues. Y96 bears the Phosphotyrosine mark. Residues S99, S109, and S542 each carry the phosphoserine modification.

Belongs to the phosphatase 2A regulatory subunit B family. In terms of assembly, PP2A consists of a common heterodimeric core enzyme, composed of a 36 kDa catalytic subunit (subunit C) and a 65 kDa constant regulatory subunit (PR65 or subunit A), that associates with a variety of regulatory subunits. Proteins that associate with the core dimer include three families of regulatory subunits B (the R2/B/PR55/B55, R3/B''/PR72/PR130/PR59 and R5/B'/B56 families), the 48 kDa variable regulatory subunit, viral proteins, and cell signaling molecules.

Its subcellular location is the cytoplasm. It is found in the nucleus. Its function is as follows. The B regulatory subunit might modulate substrate selectivity and catalytic activity, and might also direct the localization of the catalytic enzyme to a particular subcellular compartment. Has a role in cell shape control and septum formation. The chain is Serine/threonine-protein phosphatase 2A 56 kDa regulatory subunit delta 1 isoform (par1) from Schizosaccharomyces pombe (strain 972 / ATCC 24843) (Fission yeast).